The following is a 349-amino-acid chain: Lachesin (349 aa).

An N-terminal signal peptide occupies residues 1-18 (MDLRLYTIFVGFFSVVYA). One can recognise an Ig-like V-type domain in the interval 22-127 (PTISYISQEQ…NKITAEVDLQ (106 aa)). Cys43 and Cys110 are oxidised to a cystine. 2 consecutive Ig-like C2-type domains span residues 132 to 218 (PVIS…IAVE) and 222 to 315 (PPVI…VELF). Asn137 carries an N-linked (GlcNAc...) asparagine glycan. 2 cysteine pairs are disulfide-bonded: Cys154-Cys201 and Cys244-Cys299. Residue Gly332 is the site of GPI-anchor amidated glycine attachment. Positions 333 to 349 (DAAEISTSMALILISTI) are cleaved as a propeptide — removed in mature form.

Post-translationally, the N-terminus is blocked. As to expression, expressed by all neurogenic cells early, but only those cells that become neuroblasts continue to express it. Expressed by neuroblasts, ganglion mother cells and neurons early in their lives, but expression becomes restricted to a subset of neurons as development progresses. Expressed by sensory neurons as they delaminate from the body wall ectoderm. It is also present on growing axons of the CNS and PNS and becomes restricted to a subset of axons later in development.

Its subcellular location is the cell membrane. May play a role in early neuronal differentiation and axon outgrowth. This chain is Lachesin (LAC), found in Schistocerca americana (American grasshopper).